The primary structure comprises 443 residues: Dihydroorotate dehydrogenase (quinone), mitochondrial (443 aa).

The transit peptide at 1–21 (MYQRSLFRGVAQGLKRSSVRF) directs the protein to the mitochondrion. The helical transmembrane segment at 38 to 54 (WKLLSVIGSFTAGVAIY) threads the bilayer. FMN contacts are provided by residues 122-126 (AGFDK) and S146. A substrate-binding site is contributed by K126. S168 carries the post-translational modification Phosphoserine. A substrate-binding site is contributed by 171-175 (NRYGF). The FMN site is built by N234 and N264. Position 264–269 (264–269 (NVSSPN)) interacts with substrate. S267 functions as the Nucleophile in the catalytic mechanism. K306 contacts FMN. 335 to 336 (NT) lines the substrate pocket. FMN-binding positions include G358, G387, and 408–409 (YT).

Belongs to the dihydroorotate dehydrogenase family. Type 2 subfamily. The cofactor is FMN.

The protein resides in the mitochondrion inner membrane. It catalyses the reaction (S)-dihydroorotate + a quinone = orotate + a quinol. It functions in the pathway pyrimidine metabolism; UMP biosynthesis via de novo pathway; orotate from (S)-dihydroorotate (quinone route): step 1/1. In terms of biological role, in the de novo pyrimidine biosynthesis pathway, catalyzes the stereospecific oxidation of (S)-dihydroorotate to orotate with reduction of flavin and the transfer of electrons to ubiquinone, which is part of the respiratory chain. Does not use fumarate and NAD as electron acceptors. This is Dihydroorotate dehydrogenase (quinone), mitochondrial (ura3) from Schizosaccharomyces pombe (strain 972 / ATCC 24843) (Fission yeast).